Reading from the N-terminus, the 183-residue chain is Small ribosomal subunit protein uS4c (183 aa).

Residues 82–143 form the S4 RNA-binding domain; sequence MRLDNILFRL…KQRSKALIQN (62 aa).

It belongs to the universal ribosomal protein uS4 family. Part of the 30S ribosomal subunit. Contacts protein S5. The interaction surface between S4 and S5 is involved in control of translational fidelity.

Its subcellular location is the plastid. It localises to the chloroplast. Its function is as follows. One of the primary rRNA binding proteins, it binds directly to 16S rRNA where it nucleates assembly of the body of the 30S subunit. In terms of biological role, with S5 and S12 plays an important role in translational accuracy. The sequence is that of Small ribosomal subunit protein uS4c (rps4) from Crocosmia sp. (strain Porto Alegre 034).